Here is an 835-residue protein sequence, read N- to C-terminus: DNA primase (835 aa).

Residues 778–817 form a CHC2-type zinc finger; the sequence is CLNFKHRLKTQSVRIFLSLHLTPDNCVTLTLMSQCFASKC.

This sequence belongs to the herpesviridae DNA primase family. As to quaternary structure, associates with the helicase and the primase-associated factor to form the helicase-primase factor.

Its subcellular location is the host nucleus. Functionally, essential component of the helicase/primase complex. Unwinds the DNA at the replication forks and generates single-stranded DNA for both leading and lagging strand synthesis. The primase initiates primer synthesis and thereby produces large amount of short RNA primers on the lagging strand that the polymerase elongates using dNTPs. The protein is DNA primase (56) of Saimiri sciureus (Common squirrel monkey).